Consider the following 89-residue polypeptide: Small ribosomal subunit protein uS15 (89 aa).

This sequence belongs to the universal ribosomal protein uS15 family. In terms of assembly, part of the 30S ribosomal subunit. Forms a bridge to the 50S subunit in the 70S ribosome, contacting the 23S rRNA.

One of the primary rRNA binding proteins, it binds directly to 16S rRNA where it helps nucleate assembly of the platform of the 30S subunit by binding and bridging several RNA helices of the 16S rRNA. Its function is as follows. Forms an intersubunit bridge (bridge B4) with the 23S rRNA of the 50S subunit in the ribosome. In Methylorubrum populi (strain ATCC BAA-705 / NCIMB 13946 / BJ001) (Methylobacterium populi), this protein is Small ribosomal subunit protein uS15.